A 323-amino-acid chain; its full sequence is tRNA U34 carboxymethyltransferase (323 aa).

Carboxy-S-adenosyl-L-methionine is bound by residues lysine 91, tryptophan 105, lysine 110, glycine 130, 152–154 (DPT), 181–182 (IE), methionine 196, tyrosine 200, and arginine 315.

It belongs to the class I-like SAM-binding methyltransferase superfamily. CmoB family. Homotetramer.

The enzyme catalyses carboxy-S-adenosyl-L-methionine + 5-hydroxyuridine(34) in tRNA = 5-carboxymethoxyuridine(34) in tRNA + S-adenosyl-L-homocysteine + H(+). Its function is as follows. Catalyzes carboxymethyl transfer from carboxy-S-adenosyl-L-methionine (Cx-SAM) to 5-hydroxyuridine (ho5U) to form 5-carboxymethoxyuridine (cmo5U) at position 34 in tRNAs. The chain is tRNA U34 carboxymethyltransferase from Escherichia coli O8 (strain IAI1).